A 624-amino-acid polypeptide reads, in one-letter code: Probable potassium transport system protein Kup 2 (624 aa).

Helical transmembrane passes span 14 to 34, 51 to 71, 97 to 117, 133 to 153, 163 to 183, 211 to 231, 245 to 265, 283 to 303, 335 to 355, 364 to 384, 393 to 413, and 416 to 436; these read LSFA…LYAF, ILSL…LVIV, GGWL…DGML, LSPN…FFLF, IGVY…ILGF, SALF…ALFA, WFAV…AFVL, FLPV…QAII, VYLP…VVIF, AYGI…GIIA, FKIL…AGNI, and LLTG…VMYT.

This sequence belongs to the HAK/KUP transporter (TC 2.A.72) family.

The protein resides in the cell inner membrane. It carries out the reaction K(+)(in) + H(+)(in) = K(+)(out) + H(+)(out). Transport of potassium into the cell. Likely operates as a K(+):H(+) symporter. The sequence is that of Probable potassium transport system protein Kup 2 from Legionella pneumophila (strain Lens).